Reading from the N-terminus, the 2157-residue chain is Polyketide synthase 2 (2157 aa).

Positions 7-244 (FIFGDQTGGF…IPIPIWAPYH (238 aa)) are N-terminal acylcarrier protein transacylase domain (SAT). The Ketosynthase family 3 (KS3) domain occupies 374 to 807 (DAKIAIIGMS…GGNSALLLED (434 aa)). Active-site for beta-ketoacyl synthase activity residues include Cys-546, His-681, and His-723. The segment at 908-1213 (GFVFSGQGAQ…ASLHRKDDGW (306 aa)) is malonyl-CoA:ACP transacylase (MAT) domain. Ser-998 (for acyl/malonyl transferase activity) is an active-site residue. Positions 1290 to 1605 (TSSVQKIIQQ…RSLLNKVLPP (316 aa)) are product template (PT) domain. Residues 1294-1428 (QKIIQQTDGP…CLLCFADPNS (135 aa)) are N-terminal hotdog fold. A PKS/mFAS DH domain is found at 1294–1600 (QKIIQQTDGP…FLGMSRSLLN (307 aa)). The active-site Proton acceptor; for dehydratase activity is the His-1327. Residues 1455 to 1600 (TDSLLSKGIV…FLGMSRSLLN (146 aa)) form a C-terminal hotdog fold region. Catalysis depends on Asp-1514, which acts as the Proton donor; for dehydratase activity. The interval 1629-1653 (AKDTERRPLDIPTRAQRQPNSPPTG) is disordered. Residues 1649–1726 (SPPTGTLGRI…ELKEFLGADQ (78 aa)) enclose the Carrier 1 domain. Ser-1686 carries the O-(pantetheine 4'-phosphoryl)serine modification. A disordered region spans residues 1729–1765 (DDAVACESSNGQHTPQTSDKGSGTLAAQKPDDDTGSD). Residues 1735–1749 (ESSNGQHTPQTSDKG) are compositionally biased toward polar residues. A Carrier 2 domain is found at 1765–1839 (DTTLHRVCAI…SLQKALCGTE (75 aa)). An O-(pantetheine 4'-phosphoryl)serine modification is found at Ser-1799. The thioesterase (TE) domain stretch occupies residues 1875 to 2151 (ASPPHATSIL…MAEMGDLIGE (277 aa)). Ser-1981 functions as the For thioesterase activity in the catalytic mechanism.

Functionally, polyketide synthase; part of the Pks2 gene cluster that mediates the formation of infectious structures (appressoria), enabling these fungi to kill insects faster. The product of the Pks2 gene cluster is different from the one of Pks1 and has still not been identified. The protein is Polyketide synthase 2 of Metarhizium guizhouense (strain ARSEF 977).